Reading from the N-terminus, the 451-residue chain is tRNA modification GTPase MnmE (451 aa).

(6S)-5-formyl-5,6,7,8-tetrahydrofolate is bound by residues arginine 28, glutamate 85, and lysine 124. The TrmE-type G domain occupies 220 to 373; it reads GLYTVLVGPP…LKTRLRTLLL (154 aa). Residue asparagine 230 coordinates K(+). GTP contacts are provided by residues 230–235, 249–255, and 274–277; these read NVGKSS, TDVPGTT, and DTAG. Residue serine 234 coordinates Mg(2+). Threonine 249, valine 251, and threonine 254 together coordinate K(+). Residue threonine 255 participates in Mg(2+) binding. Lysine 451 is a (6S)-5-formyl-5,6,7,8-tetrahydrofolate binding site.

It belongs to the TRAFAC class TrmE-Era-EngA-EngB-Septin-like GTPase superfamily. TrmE GTPase family. Homodimer. Heterotetramer of two MnmE and two MnmG subunits. K(+) is required as a cofactor.

Its subcellular location is the cytoplasm. Functionally, exhibits a very high intrinsic GTPase hydrolysis rate. Involved in the addition of a carboxymethylaminomethyl (cmnm) group at the wobble position (U34) of certain tRNAs, forming tRNA-cmnm(5)s(2)U34. The sequence is that of tRNA modification GTPase MnmE from Xylella fastidiosa (strain 9a5c).